Reading from the N-terminus, the 81-residue chain is Photosystem I iron-sulfur center (81 aa).

2 4Fe-4S ferredoxin-type domains span residues serine 2–tryptophan 31 and isoleucine 39–tyrosine 68. 8 residues coordinate [4Fe-4S] cluster: cysteine 11, cysteine 14, cysteine 17, cysteine 21, cysteine 48, cysteine 51, cysteine 54, and cysteine 58.

In terms of assembly, the cyanobacterial PSI reaction center is composed of one copy each of PsaA,B,C,D,E,F,I,J,K,L,M and X, and forms trimeric complexes. Requires [4Fe-4S] cluster as cofactor.

The protein localises to the cellular thylakoid membrane. The enzyme catalyses reduced [plastocyanin] + hnu + oxidized [2Fe-2S]-[ferredoxin] = oxidized [plastocyanin] + reduced [2Fe-2S]-[ferredoxin]. Apoprotein for the two 4Fe-4S centers FA and FB of photosystem I (PSI); essential for photochemical activity. FB is the terminal electron acceptor of PSI, donating electrons to ferredoxin. The C-terminus interacts with PsaA/B/D and helps assemble the protein into the PSI complex. Required for binding of PsaD and PsaE to PSI. PSI is a plastocyanin/cytochrome c6-ferredoxin oxidoreductase, converting photonic excitation into a charge separation, which transfers an electron from the donor P700 chlorophyll pair to the spectroscopically characterized acceptors A0, A1, FX, FA and FB in turn. The protein is Photosystem I iron-sulfur center of Mastigocladus laminosus (Fischerella sp.).